The chain runs to 515 residues: Maturase K (515 aa).

Belongs to the intron maturase 2 family. MatK subfamily.

Its subcellular location is the plastid. The protein localises to the chloroplast. In terms of biological role, usually encoded in the trnK tRNA gene intron. Probably assists in splicing its own and other chloroplast group II introns. This chain is Maturase K, found in Sorghum bicolor (Sorghum).